The sequence spans 376 residues: Succinyl-diaminopimelate desuccinylase (376 aa).

His66 contributes to the Zn(2+) binding site. Asp68 is a catalytic residue. Asp99 is a binding site for Zn(2+). The Proton acceptor role is filled by Glu133. 3 residues coordinate Zn(2+): Glu134, Glu162, and His349.

This sequence belongs to the peptidase M20A family. DapE subfamily. Homodimer. Zn(2+) is required as a cofactor. It depends on Co(2+) as a cofactor.

The enzyme catalyses N-succinyl-(2S,6S)-2,6-diaminopimelate + H2O = (2S,6S)-2,6-diaminopimelate + succinate. Its pathway is amino-acid biosynthesis; L-lysine biosynthesis via DAP pathway; LL-2,6-diaminopimelate from (S)-tetrahydrodipicolinate (succinylase route): step 3/3. Its function is as follows. Catalyzes the hydrolysis of N-succinyl-L,L-diaminopimelic acid (SDAP), forming succinate and LL-2,6-diaminopimelate (DAP), an intermediate involved in the bacterial biosynthesis of lysine and meso-diaminopimelic acid, an essential component of bacterial cell walls. This is Succinyl-diaminopimelate desuccinylase from Ruthia magnifica subsp. Calyptogena magnifica.